Reading from the N-terminus, the 233-residue chain is Orotate phosphoribosyltransferase (233 aa).

Lys-29 provides a ligand contact to 5-phospho-alpha-D-ribose 1-diphosphate. 37-38 (FF) provides a ligand contact to orotate. 5-phospho-alpha-D-ribose 1-diphosphate is bound by residues 79–80 (YK), Arg-109, Lys-110, Lys-113, His-115, and 135–143 (DDVITAGTA). Orotate-binding residues include Thr-139 and Arg-167.

It belongs to the purine/pyrimidine phosphoribosyltransferase family. PyrE subfamily. In terms of assembly, homodimer.

It catalyses the reaction orotidine 5'-phosphate + diphosphate = orotate + 5-phospho-alpha-D-ribose 1-diphosphate. Its pathway is pyrimidine metabolism; UMP biosynthesis via de novo pathway; UMP from orotate: step 1/2. In terms of biological role, catalyzes the transfer of a ribosyl phosphate group from 5-phosphoribose 1-diphosphate to orotate, leading to the formation of orotidine monophosphate (OMP). This is Orotate phosphoribosyltransferase (ura-5) from Neurospora crassa (strain ATCC 24698 / 74-OR23-1A / CBS 708.71 / DSM 1257 / FGSC 987).